A 301-amino-acid chain; its full sequence is Hydroxymycolate synthase MmaA4 (301 aa).

S-adenosyl-L-methionine is bound by residues 42–43 (YS), 81–83 (GCG), 103–108 (TLSKNQ), 132–133 (WE), and Ile-145. The active site involves Cys-278.

This sequence belongs to the CFA/CMAS family. In terms of assembly, monomer.

It functions in the pathway lipid metabolism; mycolic acid biosynthesis. Its activity is regulated as follows. Inhibited by S-adenosyl-N-decyl-aminoethyl (SADAE). In terms of biological role, involved in the biosynthesis of hydroxymycolate, a common precursor of oxygenated mycolic acids (methoxy-mycolate and keto-mycolate). Probably transfers a methyl group from the S-adenosylmethionine (SAM) cofactor and, subsequently or simultaneously, a water molecule onto the double bound of ethylene substrates, leading to the formation of the hydroxylated product at the distal position. Involved in the activation of the antitubercular drug thiacetazone (TAC). This Mycobacterium tuberculosis (strain ATCC 25618 / H37Rv) protein is Hydroxymycolate synthase MmaA4 (mmaA4).